A 423-amino-acid chain; its full sequence is Phospholipase A1-IIalpha (423 aa).

Residues 194 to 217 (SAQEQVQGELKRLLELYKDEEISI) are a coiled coil. Ser-223 functions as the Acyl-ester intermediate in the catalytic mechanism. Catalysis depends on charge relay system residues Ser-223, Asp-290, and His-327. A disordered region spans residues 399 to 423 (HDDDVDADDNDDSSTSNQLQELNTD). Acidic residues predominate over residues 401–410 (DDVDADDNDD). Residues 411 to 423 (SSTSNQLQELNTD) are compositionally biased toward polar residues.

Belongs to the AB hydrolase superfamily. Lipase family.

The protein localises to the cytoplasm. In terms of biological role, acylhydrolase that catalyzes the hydrolysis of phospholipids at the sn-1 position. This chain is Phospholipase A1-IIalpha, found in Arabidopsis thaliana (Mouse-ear cress).